Reading from the N-terminus, the 43-residue chain is Protein PsbN (43 aa).

The helical transmembrane segment at 5–27 (TFITIFISCLLVSVTGYALYTAF) threads the bilayer.

The protein belongs to the PsbN family.

It is found in the plastid. The protein resides in the chloroplast thylakoid membrane. In terms of biological role, may play a role in photosystem I and II biogenesis. This is Protein PsbN from Chara vulgaris (Common stonewort).